The sequence spans 407 residues: Imidazolonepropionase (407 aa).

Fe(3+) contacts are provided by His-72 and His-74. Positions 72 and 74 each coordinate Zn(2+). Positions 81, 144, and 177 each coordinate 4-imidazolone-5-propanoate. Tyr-144 provides a ligand contact to N-formimidoyl-L-glutamate. His-242 provides a ligand contact to Fe(3+). His-242 provides a ligand contact to Zn(2+). Position 245 (Gln-245) interacts with 4-imidazolone-5-propanoate. Asp-317 provides a ligand contact to Fe(3+). Asp-317 contacts Zn(2+). The N-formimidoyl-L-glutamate site is built by Asn-319 and Gly-321. Thr-322 serves as a coordination point for 4-imidazolone-5-propanoate.

The protein belongs to the metallo-dependent hydrolases superfamily. HutI family. Requires Zn(2+) as cofactor. Fe(3+) serves as cofactor.

It is found in the cytoplasm. It catalyses the reaction 4-imidazolone-5-propanoate + H2O = N-formimidoyl-L-glutamate. The protein operates within amino-acid degradation; L-histidine degradation into L-glutamate; N-formimidoyl-L-glutamate from L-histidine: step 3/3. Catalyzes the hydrolytic cleavage of the carbon-nitrogen bond in imidazolone-5-propanoate to yield N-formimidoyl-L-glutamate. It is the third step in the universal histidine degradation pathway. The sequence is that of Imidazolonepropionase from Aliivibrio salmonicida (strain LFI1238) (Vibrio salmonicida (strain LFI1238)).